The sequence spans 159 residues: MEPDAMTETPTELGTADIMRVMELLPHRYPFLLVDRITAINGDDSCIGIKNVTINEPQFTGHFPAMPVFPGVLLVEGMAQTAGAICCAHKLQNNTKPSRVYLMTIDKVKFRKPVVPGDTVEYHMKKVSNRRFMWWFRGEAKVNGVLVAEAEIGAMLVTE.

His-62 is an active-site residue.

It belongs to the thioester dehydratase family. FabZ subfamily.

The protein localises to the cytoplasm. The catalysed reaction is a (3R)-hydroxyacyl-[ACP] = a (2E)-enoyl-[ACP] + H2O. Involved in unsaturated fatty acids biosynthesis. Catalyzes the dehydration of short chain beta-hydroxyacyl-ACPs and long chain saturated and unsaturated beta-hydroxyacyl-ACPs. This chain is 3-hydroxyacyl-[acyl-carrier-protein] dehydratase FabZ, found in Methylobacterium nodulans (strain LMG 21967 / CNCM I-2342 / ORS 2060).